A 432-amino-acid polypeptide reads, in one-letter code: Putative D-alanyl-D-alanine carboxypeptidase (432 aa).

A helical; Signal-anchor membrane pass occupies residues 7–25; that stretch reads ATVLLTFSLSAFAVEYPVL.

This sequence belongs to the peptidase S12 family. YfeW subfamily.

The protein resides in the cell inner membrane. It carries out the reaction Preferential cleavage: (Ac)2-L-Lys-D-Ala-|-D-Ala. Also transpeptidation of peptidyl-alanyl moieties that are N-acyl substituents of D-alanine.. In Salmonella typhimurium (strain LT2 / SGSC1412 / ATCC 700720), this protein is Putative D-alanyl-D-alanine carboxypeptidase.